The following is a 904-amino-acid chain: DNA mismatch repair protein MutS (904 aa).

654-661 (GPNMAGKS) serves as a coordination point for ATP.

The protein belongs to the DNA mismatch repair MutS family.

Functionally, this protein is involved in the repair of mismatches in DNA. It is possible that it carries out the mismatch recognition step. This protein has a weak ATPase activity. The polypeptide is DNA mismatch repair protein MutS (Caulobacter sp. (strain K31)).